Reading from the N-terminus, the 427-residue chain is Enolase (427 aa).

Position 163 (glutamine 163) interacts with (2R)-2-phosphoglycerate. Residue glutamate 205 is the Proton donor of the active site. 3 residues coordinate Mg(2+): aspartate 242, glutamate 285, and aspartate 312. Lysine 337, arginine 366, serine 367, and lysine 388 together coordinate (2R)-2-phosphoglycerate. Catalysis depends on lysine 337, which acts as the Proton acceptor.

Belongs to the enolase family. Mg(2+) is required as a cofactor.

It is found in the cytoplasm. Its subcellular location is the secreted. The protein resides in the cell surface. The catalysed reaction is (2R)-2-phosphoglycerate = phosphoenolpyruvate + H2O. It functions in the pathway carbohydrate degradation; glycolysis; pyruvate from D-glyceraldehyde 3-phosphate: step 4/5. Catalyzes the reversible conversion of 2-phosphoglycerate (2-PG) into phosphoenolpyruvate (PEP). It is essential for the degradation of carbohydrates via glycolysis. This chain is Enolase, found in Paraburkholderia phytofirmans (strain DSM 17436 / LMG 22146 / PsJN) (Burkholderia phytofirmans).